The primary structure comprises 207 residues: MARYLGPKAKLARREGTDLYLKSARRSISDKSKFESKPGQHGRTSGSRTSDFGLQLREKQKVKRMYGVLEKQFRRYFAEADRRKGNTGANLLLLLESRLDNVVYRMGFGSTRAEARQLVSHKAVTVNGQSVNIPSYLVKAGDVISVREKSKKQLRIIDALKLADSIGLPAWVSVDLTKMEGIFKKAPDRDEFGAEINESLIVELYSR.

The disordered stretch occupies residues K22 to L54. The span at S27–P38 shows a compositional bias: basic and acidic residues. Residues G42–F52 show a composition bias toward polar residues. Residues S97–I157 form the S4 RNA-binding domain.

Belongs to the universal ribosomal protein uS4 family. As to quaternary structure, part of the 30S ribosomal subunit. Contacts protein S5. The interaction surface between S4 and S5 is involved in control of translational fidelity.

In terms of biological role, one of the primary rRNA binding proteins, it binds directly to 16S rRNA where it nucleates assembly of the body of the 30S subunit. With S5 and S12 plays an important role in translational accuracy. This chain is Small ribosomal subunit protein uS4, found in Leptothrix cholodnii (strain ATCC 51168 / LMG 8142 / SP-6) (Leptothrix discophora (strain SP-6)).